Reading from the N-terminus, the 838-residue chain is Probable bifunctional folylpolyglutamate synthase/dihydropteroate synthase (838 aa).

Residues M1 to A418 form a folylpolyglutamate synthase region. G46–S52 serves as a coordination point for ATP. Residues A541 to D561 form a disordered region. In terms of domain architecture, Pterin-binding spans T569–N819. Residues V571–D838 are DHPS. Position 576 (N576) interacts with Mg(2+). (7,8-dihydropterin-6-yl)methyl diphosphate-binding positions include T616, D649, N668, D738, K774, and R807–H809.

In the N-terminal section; belongs to the folylpolyglutamate synthase family. This sequence in the C-terminal section; belongs to the DHPS family. It depends on Mg(2+) as a cofactor.

The catalysed reaction is (6S)-5,6,7,8-tetrahydrofolyl-(gamma-L-Glu)(n) + L-glutamate + ATP = (6S)-5,6,7,8-tetrahydrofolyl-(gamma-L-Glu)(n+1) + ADP + phosphate + H(+). It carries out the reaction (7,8-dihydropterin-6-yl)methyl diphosphate + 4-aminobenzoate = 7,8-dihydropteroate + diphosphate. Its pathway is cofactor biosynthesis; tetrahydrofolylpolyglutamate biosynthesis. The protein operates within cofactor biosynthesis; tetrahydrofolate biosynthesis; 7,8-dihydrofolate from 2-amino-4-hydroxy-6-hydroxymethyl-7,8-dihydropteridine diphosphate and 4-aminobenzoate: step 1/2. Can complement an H.volcanii mutant strain that is thymidine auxotroph because it lacks the two dihydrofolate reductase genes encoded by hdrA and hdrB. The protein is Probable bifunctional folylpolyglutamate synthase/dihydropteroate synthase (folCP) of Haloferax volcanii (strain ATCC 29605 / DSM 3757 / JCM 8879 / NBRC 14742 / NCIMB 2012 / VKM B-1768 / DS2) (Halobacterium volcanii).